Reading from the N-terminus, the 540-residue chain is Bifunctional pantoate ligase/cytidylate kinase (540 aa).

Residues 1–280 form a pantoate--beta-alanine ligase region; the sequence is MQWLRTVAAL…VGQTRLIDNL (280 aa). 28 to 35 serves as a coordination point for ATP; the sequence is MGSLHEGH. The active-site Proton donor is His35. Position 59 (Gln59) interacts with (R)-pantoate. Gln59 is a beta-alanine binding site. ATP is bound at residue 150–153; the sequence is GQKD. Gln156 serves as a coordination point for (R)-pantoate. ATP-binding positions include Val179 and 187–190; that span reads YSSR. A cytidylate kinase region spans residues 281–540; the sequence is LLSPEGVDPL…RSGAAHFDII (260 aa). The segment at 288–307 is disordered; the sequence is DPLPQEQQSAVPPSPKRGRR.

It in the N-terminal section; belongs to the pantothenate synthetase family. In the C-terminal section; belongs to the cytidylate kinase family. Type 1 subfamily.

It localises to the cytoplasm. It catalyses the reaction (R)-pantoate + beta-alanine + ATP = (R)-pantothenate + AMP + diphosphate + H(+). The enzyme catalyses CMP + ATP = CDP + ADP. It carries out the reaction dCMP + ATP = dCDP + ADP. It participates in cofactor biosynthesis; (R)-pantothenate biosynthesis; (R)-pantothenate from (R)-pantoate and beta-alanine: step 1/1. In terms of biological role, catalyzes the condensation of pantoate with beta-alanine in an ATP-dependent reaction via a pantoyl-adenylate intermediate. Functionally, catalyzes the transfer of a phosphate group from ATP to either CMP or dCMP to form CDP or dCDP and ADP, respectively. This chain is Bifunctional pantoate ligase/cytidylate kinase, found in Synechococcus sp. (strain JA-3-3Ab) (Cyanobacteria bacterium Yellowstone A-Prime).